We begin with the raw amino-acid sequence, 256 residues long: Ubiquinone/menaquinone biosynthesis C-methyltransferase UbiE (256 aa).

A compositionally biased stretch (basic and acidic residues) spans 1–12 (MNDQRKGDHAEP). The tract at residues 1 to 23 (MNDQRKGDHAEPTTHFGYQDVPE) is disordered. S-adenosyl-L-methionine contacts are provided by residues T79, D100, and 128–129 (DA).

The protein belongs to the class I-like SAM-binding methyltransferase superfamily. MenG/UbiE family.

It catalyses the reaction a 2-demethylmenaquinol + S-adenosyl-L-methionine = a menaquinol + S-adenosyl-L-homocysteine + H(+). It carries out the reaction a 2-methoxy-6-(all-trans-polyprenyl)benzene-1,4-diol + S-adenosyl-L-methionine = a 5-methoxy-2-methyl-3-(all-trans-polyprenyl)benzene-1,4-diol + S-adenosyl-L-homocysteine + H(+). The protein operates within quinol/quinone metabolism; menaquinone biosynthesis; menaquinol from 1,4-dihydroxy-2-naphthoate: step 2/2. It functions in the pathway cofactor biosynthesis; ubiquinone biosynthesis. Its function is as follows. Methyltransferase required for the conversion of demethylmenaquinol (DMKH2) to menaquinol (MKH2) and the conversion of 2-polyprenyl-6-methoxy-1,4-benzoquinol (DDMQH2) to 2-polyprenyl-3-methyl-6-methoxy-1,4-benzoquinol (DMQH2). The sequence is that of Ubiquinone/menaquinone biosynthesis C-methyltransferase UbiE from Pseudomonas putida (strain GB-1).